Consider the following 80-residue polypeptide: Serine rich endogenous peptide 18 (80 aa).

An N-terminal signal peptide occupies residues 1-25; sequence MYNVVVCLLTLSFLLLTGLSNTAEA. Residues 45 to 59 carry the SCOOP motif motif; that stretch reads KAEVGGSCSPHAHGR. Positions 50 to 80 are disordered; sequence GSCSPHAHGRGPPNRPGSSNIPGSPKRCTKP. A SxS motif essential for MIK2 binding motif is present at residues 51–53; sequence SCS.

It belongs to the serine rich endogenous peptide (SCOOP) phytocytokine family. As to quaternary structure, interacts with MIK2 (via extracellular leucine-rich repeat domain); this interaction triggers the formation of complex between MIK2 and the BAK1/SERK3 and SERK4 coreceptors, and subsequent BAK1 activation by phosphorylation.

It localises to the cell membrane. The protein localises to the secreted. The protein resides in the extracellular space. It is found in the apoplast. In terms of biological role, brassicaceae-specific phytocytokine (plant endogenous peptide released into the apoplast) perceived by MIK2 in a BAK1/SERK3 and SERK4 coreceptors-dependent manner, that modulates various physiological and antimicrobial processes including growth prevention and reactive oxygen species (ROS) response regulation. This Arabidopsis thaliana (Mouse-ear cress) protein is Serine rich endogenous peptide 18.